The chain runs to 254 residues: Probable membrane transporter protein YjnA (254 aa).

6 helical membrane passes run 5–25 (IILMGLFVGALVGLTGVGGAA), 75–95 (AIGSIPSASLAIGILHLFPAF), 105–125 (HALGYVLTLVAISIIVRLFLD), 143–163 (ALTILIGVVFGFIVGLTSIGS), 187–207 (IAHAFLLVTAAGILNASFGSV), and 209–229 (YMLAANLLLGSIPGVLIGSHL).

The protein belongs to the 4-toluene sulfonate uptake permease (TSUP) (TC 2.A.102) family.

The protein resides in the cell membrane. This Bacillus subtilis (strain 168) protein is Probable membrane transporter protein YjnA (yjnA).